A 237-amino-acid polypeptide reads, in one-letter code: Ferritin, mitochondrial (237 aa).

A mitochondrion-targeting transit peptide spans 1–49; that stretch reads MLSCFWFFSKHISSALMSLPRVLHRFTAPQCLASRYPLGPLLASPRRLL. A Ferritin-like diiron domain is found at 66–215; it reads QNFHPDSEAA…DHVHNLVTMG (150 aa). Residues Glu83, Glu118, His121, Glu163, and Gln197 each contribute to the Fe cation site.

The protein belongs to the ferritin family. Homooligomer of 24 subunits. The functional molecule is roughly spherical and contains a central cavity into which the polymeric mineral iron core is deposited.

It is found in the mitochondrion. The catalysed reaction is 4 Fe(2+) + O2 + 4 H(+) = 4 Fe(3+) + 2 H2O. Catalyzes the oxidation of ferrous iron(II) to ferric iron(III) and stores iron in a soluble, non-toxic, readily available form. Important for iron homeostasis. Iron is taken up in the ferrous form and deposited as ferric hydroxides after oxidation. The sequence is that of Ferritin, mitochondrial from Mus musculus (Mouse).